We begin with the raw amino-acid sequence, 443 residues long: ATP-dependent protease ATPase subunit HslU (443 aa).

ATP contacts are provided by residues I18, 60-65 (GVGKTE), D256, E321, and R393.

The protein belongs to the ClpX chaperone family. HslU subfamily. A double ring-shaped homohexamer of HslV is capped on each side by a ring-shaped HslU homohexamer. The assembly of the HslU/HslV complex is dependent on binding of ATP.

It localises to the cytoplasm. In terms of biological role, ATPase subunit of a proteasome-like degradation complex; this subunit has chaperone activity. The binding of ATP and its subsequent hydrolysis by HslU are essential for unfolding of protein substrates subsequently hydrolyzed by HslV. HslU recognizes the N-terminal part of its protein substrates and unfolds these before they are guided to HslV for hydrolysis. In Edwardsiella ictaluri (strain 93-146), this protein is ATP-dependent protease ATPase subunit HslU.